The primary structure comprises 870 residues: Ribonucleoside-diphosphate reductase large subunit (870 aa).

In terms of domain architecture, ATP-cone spans 16–110 (MYVVKRDGTK…VSNLHKQTSK (95 aa)). Residues 20 to 21 (KR), 26 to 32 (ENVSFDK), Thr-71, and Asp-75 contribute to the ATP site. GDP is bound at residue Ser-235. A disulfide bond links Cys-236 and Cys-463. Residues 244 to 246 (DSI), Lys-261, Arg-274, and 281 to 282 (RG) contribute to the dTTP site. Position 446 (Asn-446) interacts with GDP. The active-site Proton acceptor is the Asn-446. The Cysteine radical intermediate role is filled by Cys-448. GDP is bound by residues Glu-450 and 632-635 (TAST). Catalysis depends on Glu-450, which acts as the Proton acceptor. The interval 789 to 854 (KPVENNINST…NNNEDDLANY (66 aa)) is disordered. Residues 796-811 (NSTTPLKTPTKTPNSS) are compositionally biased toward low complexity. The span at 812 to 831 (NRISTSPTNNLTSPIRFNIT) shows a compositional bias: polar residues. The span at 832 to 844 (QQQQQQQQQQQQQ) shows a compositional bias: low complexity.

This sequence belongs to the ribonucleoside diphosphate reductase large chain family. Heterodimer of a large and a small subunit.

It is found in the cytoplasm. It catalyses the reaction a 2'-deoxyribonucleoside 5'-diphosphate + [thioredoxin]-disulfide + H2O = a ribonucleoside 5'-diphosphate + [thioredoxin]-dithiol. Under complex allosteric control mediated by deoxynucleoside triphosphates and ATP binding to separate specificity and activation sites on the large subunit. The type of nucleotide bound at the specificity site determines substrate preference. It seems probable that ATP makes the enzyme reduce CDP and UDP, dGTP favors ADP reduction and dTTP favors GDP reduction. Stimulated by ATP and inhibited by dATP binding to the activity site. In terms of biological role, provides the precursors necessary for DNA synthesis. Catalyzes the biosynthesis of deoxyribonucleotides from the corresponding ribonucleotides. This Dictyostelium discoideum (Social amoeba) protein is Ribonucleoside-diphosphate reductase large subunit (rnrA).